The primary structure comprises 271 residues: Glutamate racemase (271 aa).

Substrate-binding positions include 12 to 13 (DS) and 44 to 45 (YG). Catalysis depends on cysteine 75, which acts as the Proton donor/acceptor. Residue 76 to 77 (NS) coordinates substrate. Cysteine 185 serves as the catalytic Proton donor/acceptor. 186–187 (TH) contributes to the substrate binding site.

Belongs to the aspartate/glutamate racemases family.

It catalyses the reaction L-glutamate = D-glutamate. Its pathway is cell wall biogenesis; peptidoglycan biosynthesis. In terms of biological role, provides the (R)-glutamate required for cell wall biosynthesis. The sequence is that of Glutamate racemase from Mycobacterium bovis (strain BCG / Pasteur 1173P2).